Reading from the N-terminus, the 360-residue chain is MRVFNFSAGPAAMPEEVLRQAADEMLDWHGSGMSVMEMSHRGKEFMSIHEAALTDLRDLLGVPASHRILFLQGGGIAENAIVPMNLLGARKTADFVVTGSWSQKSFGEAKKFCAPHLAASGKTEAGFTRAPARAEWQLSDDPAYVHLCTNETIDGVETFEIPDLGDVPLVADVSSHILSRPMDVAKYGVLFGGAQKNIGMAGVTVVIVREDLLDRALSICPSAFEWKTIAANNSLYNTPPTYAIYIAGLVFQWLKRQGGLEAIEARNIEKSKLLYDTIDASSFYLNKVEPAARSRMNVPFFLADETRNEDFLAGAKARGLLQLKGHKSVGGMRASIYNAVPLEGVKALVEYMKDFEQRGA.

Residue R41 participates in L-glutamate binding. 4 residues coordinate pyridoxal 5'-phosphate: W101, T152, D172, and Q195. An N6-(pyridoxal phosphate)lysine modification is found at K196. 237 to 238 (NT) is a binding site for pyridoxal 5'-phosphate.

This sequence belongs to the class-V pyridoxal-phosphate-dependent aminotransferase family. SerC subfamily. As to quaternary structure, homodimer. Pyridoxal 5'-phosphate serves as cofactor.

The protein localises to the cytoplasm. It catalyses the reaction O-phospho-L-serine + 2-oxoglutarate = 3-phosphooxypyruvate + L-glutamate. It carries out the reaction 4-(phosphooxy)-L-threonine + 2-oxoglutarate = (R)-3-hydroxy-2-oxo-4-phosphooxybutanoate + L-glutamate. The protein operates within amino-acid biosynthesis; L-serine biosynthesis; L-serine from 3-phospho-D-glycerate: step 2/3. It participates in cofactor biosynthesis; pyridoxine 5'-phosphate biosynthesis; pyridoxine 5'-phosphate from D-erythrose 4-phosphate: step 3/5. Catalyzes the reversible conversion of 3-phosphohydroxypyruvate to phosphoserine and of 3-hydroxy-2-oxo-4-phosphonooxybutanoate to phosphohydroxythreonine. This chain is Phosphoserine aminotransferase, found in Burkholderia cenocepacia (strain HI2424).